We begin with the raw amino-acid sequence, 1047 residues long: uncharacterized protein (1047 aa).

Lys17 bears the N6-acetyllysine mark. Disordered stretches follow at residues 172 to 208 (PPCSLAPAPSKGQTLDGTFLRGVPAEGSSKDSSGSFS) and 236 to 283 (RNSK…PQAL). Ser208 bears the Phosphoserine mark. A compositionally biased stretch (polar residues) spans 237 to 254 (NSKQAMSEGPSSPWTQLA). The segment covering 268 to 283 (HYPPPHHPPPHPPQAL) has biased composition (pro residues). Phosphoserine occurs at positions 299 and 391. Phosphothreonine is present on Thr397. Disordered regions lie at residues 448 to 469 (EKLQPRLSEHSGPPIVIRDSPV), 482 to 504 (ECQSLPQKEGARPPSSPPMPVID), 519 to 567 (PAPE…LRGS), 668 to 690 (PSTPTSAPAPTQPAPTPTSGPIG), 714 to 763 (VAVA…GDSL), 931 to 1004 (EAGA…TLKA), and 1021 to 1047 (PTWGHKSSRPDQPSPCPQLLDSQSHHL). 3 positions are modified to phosphoserine: Ser455, Ser496, and Ser497. Low complexity-rich tracts occupy residues 729–741 (PARAQAPASARDP) and 751–762 (PAPASTSAPGDS). Ser936, Ser956, Ser988, and Ser996 each carry phosphoserine. Over residues 978–996 (AAAGEESCGASPTPATSAS) the composition is skewed to low complexity.

This is an uncharacterized protein from Homo sapiens (Human).